The chain runs to 609 residues: Vanadium chloroperoxidase (609 aa).

Positions 353, 360, 402, 403, 404, 490, and 496 each coordinate vanadate. His-404 (proton donor) is an active-site residue. The tract at residues Lys-569–Pro-609 is disordered.

This sequence belongs to the vanadium-dependent haloperoxidase family. Homotetramer. Vanadate serves as cofactor. In terms of processing, the N-terminus is blocked.

It localises to the secreted. It catalyses the reaction RH + Cl(-) + H2O2 = RCl + 2 H2O.. Its function is as follows. Catalyzes the oxidation of chloride in the presence of hydrogen peroxide to hypochlorous acid (ClOH), which in turn can react with a nucleophilic acceptor (RH), to form a chlorinated compound. The polypeptide is Vanadium chloroperoxidase (CPO) (Curvularia inaequalis (Helminthosporium inaequale)).